A 365-amino-acid polypeptide reads, in one-letter code: Phospho-N-acetylmuramoyl-pentapeptide-transferase (365 aa).

A run of 10 helical transmembrane segments spans residues 22–42 (YISVRIIMISITSLLITLALG), 74–94 (TMGGVLILSSVIISCLLWGNL), 95–115 (TSIYLWILILVVIFFGAIGFF), 134–154 (KFALQSIFSIVLAIVLFYLLS), 168–188 (SLYIPMGIVIFVVLAFFIING), 201–221 (GLAIVPVVLVAAGLGIYAYIE), 240–260 (LAEVAVFCAAVCGSGLAFLWF), 267–287 (VFMGDVGSLTLGAVLGVIAVM), 292–312 (LIFFIMGLLFVVEALSVMLQV), and 342–362 (KVVIRFWIISLILFLIGFAAI).

This sequence belongs to the glycosyltransferase 4 family. MraY subfamily. The cofactor is Mg(2+).

Its subcellular location is the cell inner membrane. It carries out the reaction UDP-N-acetyl-alpha-D-muramoyl-L-alanyl-gamma-D-glutamyl-meso-2,6-diaminopimeloyl-D-alanyl-D-alanine + di-trans,octa-cis-undecaprenyl phosphate = di-trans,octa-cis-undecaprenyl diphospho-N-acetyl-alpha-D-muramoyl-L-alanyl-D-glutamyl-meso-2,6-diaminopimeloyl-D-alanyl-D-alanine + UMP. Its pathway is cell wall biogenesis; peptidoglycan biosynthesis. Its function is as follows. Catalyzes the initial step of the lipid cycle reactions in the biosynthesis of the cell wall peptidoglycan: transfers peptidoglycan precursor phospho-MurNAc-pentapeptide from UDP-MurNAc-pentapeptide onto the lipid carrier undecaprenyl phosphate, yielding undecaprenyl-pyrophosphoryl-MurNAc-pentapeptide, known as lipid I. In Francisella tularensis subsp. holarctica (strain OSU18), this protein is Phospho-N-acetylmuramoyl-pentapeptide-transferase.